The chain runs to 297 residues: N-acetylmuramic acid 6-phosphate etherase (297 aa).

Positions 55 to 218 (AAAALKSGGR…STGAMVKFGK (164 aa)) constitute an SIS domain. Residue Glu83 is the Proton donor of the active site. Residue Glu114 is part of the active site.

This sequence belongs to the GCKR-like family. MurNAc-6-P etherase subfamily. As to quaternary structure, homodimer.

The enzyme catalyses N-acetyl-D-muramate 6-phosphate + H2O = N-acetyl-D-glucosamine 6-phosphate + (R)-lactate. Its pathway is amino-sugar metabolism; 1,6-anhydro-N-acetylmuramate degradation. It participates in amino-sugar metabolism; N-acetylmuramate degradation. The protein operates within cell wall biogenesis; peptidoglycan recycling. In terms of biological role, specifically catalyzes the cleavage of the D-lactyl ether substituent of MurNAc 6-phosphate, producing GlcNAc 6-phosphate and D-lactate. Together with AnmK, is also required for the utilization of anhydro-N-acetylmuramic acid (anhMurNAc) either imported from the medium or derived from its own cell wall murein, and thus plays a role in cell wall recycling. This Salmonella paratyphi A (strain ATCC 9150 / SARB42) protein is N-acetylmuramic acid 6-phosphate etherase.